The sequence spans 331 residues: E3 ubiquitin-protein ligase Siah2 (331 aa).

The disordered stretch occupies residues 1-26 (MSRPSSAGGAAGGLGAGKAGGSKHGG). A compositionally biased stretch (gly residues) spans 9-26 (GAAGGLGAGKAGGSKHGG). The segment at 89 to 124 (CPVCFDYVLPPILQCQAGHLVCNQCRQKLSCCPTCR) adopts an RING-type zinc-finger fold. Residues 139-331 (VASTLPFPCK…LGINVTISMC (193 aa)) form an SBD region. Residues 142–202 (TLPFPCKYSS…VMPHLMHAHK (61 aa)) form an SIAH-type zinc finger. Positions 147, 154, 166, 170, 177, 184, 196, and 201 each coordinate Zn(2+).

The protein belongs to the SINA (Seven in absentia) family. As to quaternary structure, homodimer. In terms of tissue distribution, in embryos it is expressed in all blastomeres starting at the mid-blastulla. After 20 somite stage, it is expressed mainly in the posterior part. Expressed in brain, including the eye, the cranial cavity, otic vesicle, optic chiasm and in the gut.

It catalyses the reaction S-ubiquitinyl-[E2 ubiquitin-conjugating enzyme]-L-cysteine + [acceptor protein]-L-lysine = [E2 ubiquitin-conjugating enzyme]-L-cysteine + N(6)-ubiquitinyl-[acceptor protein]-L-lysine.. Its pathway is protein modification; protein ubiquitination. In terms of biological role, E3 ubiquitin-protein ligase that mediates ubiquitination and subsequent proteasomal degradation of target proteins. E3 ubiquitin ligases accept ubiquitin from an E2 ubiquitin-conjugating enzyme in the form of a thioester and then directly transfers the ubiquitin to targeted substrates. It probably triggers the ubiquitin-mediated degradation of different substrates. Induces cellular growth arrest by inhibiting the G2/M transition. May play a role in the regulation of the cellular clock function. The sequence is that of E3 ubiquitin-protein ligase Siah2 (siah2l) from Danio rerio (Zebrafish).